A 541-amino-acid chain; its full sequence is Membrane protein insertase YidC (541 aa).

Residues Ser-6 to Asp-26 traverse the membrane as a helical segment. Residues Glu-34–Ile-56 are disordered. 4 helical membrane-spanning segments follow: residues Phe-337 to Val-357, Leu-416 to Phe-436, Leu-454 to Leu-474, and Pro-495 to Val-515.

This sequence belongs to the OXA1/ALB3/YidC family. Type 1 subfamily. Interacts with the Sec translocase complex via SecD. Specifically interacts with transmembrane segments of nascent integral membrane proteins during membrane integration.

It localises to the cell inner membrane. In terms of biological role, required for the insertion and/or proper folding and/or complex formation of integral membrane proteins into the membrane. Involved in integration of membrane proteins that insert both dependently and independently of the Sec translocase complex, as well as at least some lipoproteins. Aids folding of multispanning membrane proteins. The polypeptide is Membrane protein insertase YidC (Haemophilus influenzae (strain ATCC 51907 / DSM 11121 / KW20 / Rd)).